The following is a 243-amino-acid chain: Ribonuclease 3 (243 aa).

The region spanning 15–144 (NDTISKIINY…LIGAIYIDGG (130 aa)) is the RNase III domain. Residue Glu57 coordinates Mg(2+). Asp61 is a catalytic residue. Mg(2+) is bound by residues Asn130 and Glu133. The active site involves Glu133. The DRBM domain maps to 169–238 (DPKTSLQEWT…AELMLEKINN (70 aa)).

The protein belongs to the ribonuclease III family. As to quaternary structure, homodimer. Mg(2+) is required as a cofactor.

It localises to the cytoplasm. The enzyme catalyses Endonucleolytic cleavage to 5'-phosphomonoester.. In terms of biological role, digests double-stranded RNA. Involved in the processing of primary rRNA transcript to yield the immediate precursors to the large and small rRNAs (23S and 16S). Processes some mRNAs, and tRNAs when they are encoded in the rRNA operon. Processes pre-crRNA and tracrRNA of type II CRISPR loci if present in the organism. The protein is Ribonuclease 3 of Wolbachia sp. subsp. Brugia malayi (strain TRS).